An 842-amino-acid polypeptide reads, in one-letter code: MAMASSPACHFRHPPRLRLLLPLSTSAPHPWLYSWSHPRQRGRLRAPPAALDLRPEPSPSSDSDDEDAVGASRSSGRSTMSLILSRLRRAGYSGEDPRAAAPPHPPRGSVEDVFRADDGVLPNARGGFDADDEERALGDARFPWERPMPPPEAAPRSARSPTWMAELTLPAAELRRLRHAAIRIKSRTKVGGAGVTREIVEKIKEKWKTEEVVRVKVSGTPALNMRLFHEILERKTGGLVIWRSGTSVSLYRGVDYDEPEPTKKSKKNSQSLAMDFPIKGSSNPSLLPTETANSVRDSNVALVSNAAKEELVVQAPEIKYEDEIDKLLDELGPRYTDWPGSDPLPVDADLLPANMPGYKPPFRVLPYGVRPSLSRRDTTNLRRLARGLPPHFALGRSRQLQGLANAMVKLWEKSSIAKIALKRGVQLTTSERMAEDIKKLTGGVMLSRNNEFIVFYRGKDFLSSELAEVLLERERLAKSLQDEEEARRKAASYFSSAETYAQPTVAGTLGETLEANSKYGTKHDENHADKMARTIEAARHADLVRKLEWKLSLAQKKMEKAERVLGKVETALRPTEDSRPPETITDEERFMFRKLGLRMKAFLLLGRRGVFDGTIENMHLHWKYRELVKILVKAKSFADVKRIALSLEAESGGILVSVDKVSKGYAIVVFRGKNYRRPSSLRPRNLLSKRKALARSIELQRHQALSRHFAKLNRKVERLKAELVQMEDVKEQGDEELYAKLDAAYSSDDEDMEDEDDEAYLKRFDNEVAGATADDDGSDDYTSAADEADYPDSDDEAGDCSEDEGEDDEDEAAAGVSDAGFHGEVVGFSSDTDRRNHDVNEY.

Residues 1-82 constitute a chloroplast and mitochondrion transit peptide; the sequence is MAMASSPACH…RSSGRSTMSL (82 aa). Disordered regions lie at residues 49-80, 141-160, and 254-290; these read AALD…RSTM, RFPW…SARS, and VDYD…LPTE. Residues 167 to 263 enclose the CRM 1 domain; sequence LTLPAAELRR…VDYDEPEPTK (97 aa). Polar residues predominate over residues 280–290; it reads GSSNPSLLPTE. CRM domains follow at residues 371–468 and 582–682; these read PSLS…ELAE and ETIT…SSLR. The stretch at 703 to 732 forms a coiled coil; it reads QALSRHFAKLNRKVERLKAELVQMEDVKEQ. Positions 768 to 842 are disordered; sequence VAGATADDDG…DRRNHDVNEY (75 aa). The span at 786-812 shows a compositional bias: acidic residues; that stretch reads DEADYPDSDDEAGDCSEDEGEDDEDEA. Residues 831-842 show a composition bias toward basic and acidic residues; it reads DTDRRNHDVNEY.

Interacts with RNA. Part of large ribonucleo-protein particles that contain CAF1 and/or CAF2, and RNC1.

Its subcellular location is the plastid. The protein localises to the chloroplast stroma. It localises to the mitochondrion. Its function is as follows. Binds specific group II introns in chloroplasts and facilitates their splicing. Acts on subgroup IIB introns. The substrates of the subgroup IIB also require the CRM domain proteins CAF1 or CAF2, with a simultaneous binding of CFM3 and CAF1 or CAF2. May influence the biogenesis of the mitochondrial small ribosomal subunit. The chain is CRM-domain containing factor CFM3, chloroplastic/mitochondrial from Zea mays (Maize).